A 168-amino-acid polypeptide reads, in one-letter code: Large ribosomal subunit protein uL10 (168 aa).

It belongs to the universal ribosomal protein uL10 family. In terms of assembly, part of the ribosomal stalk of the 50S ribosomal subunit. The N-terminus interacts with L11 and the large rRNA to form the base of the stalk. The C-terminus forms an elongated spine to which L12 dimers bind in a sequential fashion forming a multimeric L10(L12)X complex.

Its function is as follows. Forms part of the ribosomal stalk, playing a central role in the interaction of the ribosome with GTP-bound translation factors. This chain is Large ribosomal subunit protein uL10, found in Clostridium acetobutylicum (strain ATCC 824 / DSM 792 / JCM 1419 / IAM 19013 / LMG 5710 / NBRC 13948 / NRRL B-527 / VKM B-1787 / 2291 / W).